A 67-amino-acid chain; its full sequence is DNA-directed RNA polymerase subunit omega (67 aa).

It belongs to the RNA polymerase subunit omega family. In terms of assembly, the RNAP catalytic core consists of 2 alpha, 1 beta, 1 beta' and 1 omega subunit. When a sigma factor is associated with the core the holoenzyme is formed, which can initiate transcription.

It catalyses the reaction RNA(n) + a ribonucleoside 5'-triphosphate = RNA(n+1) + diphosphate. Functionally, promotes RNA polymerase assembly. Latches the N- and C-terminal regions of the beta' subunit thereby facilitating its interaction with the beta and alpha subunits. The sequence is that of DNA-directed RNA polymerase subunit omega from Listeria monocytogenes serotype 4b (strain F2365).